Here is a 124-residue protein sequence, read N- to C-terminus: Fluoride-specific ion channel FluC 2 (124 aa).

The next 4 helical transmembrane spans lie at 1-21 (MNFL…YAIT), 36-58 (SNLP…FIFG), 63-85 (VFIY…TMNT), and 104-124 (LSSY…AILF). Residues Gly75 and Thr78 each coordinate Na(+).

Belongs to the fluoride channel Fluc/FEX (TC 1.A.43) family. In terms of assembly, heterodimer composed of FluC1 and FluC2. Neither FluC1 nor FluC2 alone catalyzes fluoride efflux from liposomes.

It is found in the cell membrane. It carries out the reaction fluoride(in) = fluoride(out). With respect to regulation, na(+) is not transported, but it plays an essential structural role and its presence is essential for fluoride channel function. In terms of biological role, fluoride-specific ion channel. Important for reducing fluoride concentration in the cell, thus reducing its toxicity. This Lactobacillus acidophilus (strain ATCC 700396 / NCK56 / N2 / NCFM) protein is Fluoride-specific ion channel FluC 2.